The sequence spans 209 residues: Putative 3-methyladenine DNA glycosylase (209 aa).

The interval 189 to 209 (HVSTTRLGAPKKKRQKRLERR) is disordered. Residues 197 to 209 (APKKKRQKRLERR) are compositionally biased toward basic residues.

It belongs to the DNA glycosylase MPG family.

The chain is Putative 3-methyladenine DNA glycosylase from Chlorobaculum parvum (strain DSM 263 / NCIMB 8327) (Chlorobium vibrioforme subsp. thiosulfatophilum).